A 216-amino-acid chain; its full sequence is Large ribosomal subunit protein uL3 (216 aa).

Residues 137–158 (GASHGAHKNHRKPGSIGGASTP) are disordered.

This sequence belongs to the universal ribosomal protein uL3 family. In terms of assembly, part of the 50S ribosomal subunit. Forms a cluster with proteins L14 and L19.

In terms of biological role, one of the primary rRNA binding proteins, it binds directly near the 3'-end of the 23S rRNA, where it nucleates assembly of the 50S subunit. This chain is Large ribosomal subunit protein uL3, found in Pseudarthrobacter chlorophenolicus (strain ATCC 700700 / DSM 12829 / CIP 107037 / JCM 12360 / KCTC 9906 / NCIMB 13794 / A6) (Arthrobacter chlorophenolicus).